The primary structure comprises 514 residues: Nitric oxide reductase transcription regulator NorR1 (514 aa).

At Asp-54 the chain carries 4-aspartylphosphate. The region spanning 187-416 is the Sigma-54 factor interaction domain; sequence IIGQSQAIAG…LEHVISRAAL (230 aa). ATP-binding positions include 215-222 and 287-296; these read GETGVGKE and EVGELPLSIQ. Residues 490–509 constitute a DNA-binding region (H-T-H motif); it reads WAKAARQLGMDASNLHKLAK.

Its pathway is nitrogen metabolism; nitrate reduction (denitrification) [regulation]. Its function is as follows. Required for the nitric oxide (NO) induced expression of NO reductase. Not required for expression of 2 other pathway members, nitrate reductase (nirS) and nitrous oxide reductase (nosZ). This is Nitric oxide reductase transcription regulator NorR1 (norR1) from Cupriavidus necator (strain ATCC 17699 / DSM 428 / KCTC 22496 / NCIMB 10442 / H16 / Stanier 337) (Ralstonia eutropha).